The primary structure comprises 157 residues: Small ribosomal subunit protein uS7 (157 aa).

Belongs to the universal ribosomal protein uS7 family. Part of the 30S ribosomal subunit. Contacts proteins S9 and S11.

In terms of biological role, one of the primary rRNA binding proteins, it binds directly to 16S rRNA where it nucleates assembly of the head domain of the 30S subunit. Is located at the subunit interface close to the decoding center, probably blocks exit of the E-site tRNA. In Caulobacter vibrioides (strain ATCC 19089 / CIP 103742 / CB 15) (Caulobacter crescentus), this protein is Small ribosomal subunit protein uS7.